The sequence spans 452 residues: Probable dihydrolipoyllysine-residue succinyltransferase component of 2-oxoglutarate dehydrogenase complex, mitochondrial (452 aa).

Residues 42–117 (STRIKTPPFP…TIDQDIAVID (76 aa)) form the Lipoyl-binding domain. N6-lipoyllysine is present on Lys-83. The interval 119 to 225 (SAAPPEGGSA…FSRNEDRVKM (107 aa)) is disordered. Composition is skewed to basic and acidic residues over residues 130 to 144 (PKKD…DAAK), 154 to 170 (KPIE…EQKE), and 195 to 209 (AKSE…KATE). Active-site residues include His-424 and Asp-428.

The protein belongs to the 2-oxoacid dehydrogenase family. It depends on (R)-lipoate as a cofactor.

Its subcellular location is the mitochondrion. The enzyme catalyses N(6)-[(R)-dihydrolipoyl]-L-lysyl-[protein] + succinyl-CoA = N(6)-[(R)-S(8)-succinyldihydrolipoyl]-L-lysyl-[protein] + CoA. It functions in the pathway amino-acid degradation; L-lysine degradation via saccharopine pathway; glutaryl-CoA from L-lysine: step 6/6. The 2-oxoglutarate dehydrogenase complex catalyzes the overall conversion of 2-oxoglutarate to succinyl-CoA and CO(2). It contains multiple copies of three enzymatic components: 2-oxoglutarate dehydrogenase (E1), dihydrolipoamide succinyltransferase (E2) and lipoamide dehydrogenase (E3). The protein is Probable dihydrolipoyllysine-residue succinyltransferase component of 2-oxoglutarate dehydrogenase complex, mitochondrial (kgd2) of Schizosaccharomyces pombe (strain 972 / ATCC 24843) (Fission yeast).